The chain runs to 204 residues: MSNFTAKVPLSERMADVLISKDRWKDDEEGYLKVKYGLEIILINVMKFALVYGIALVTGLLLQTVTVHLSYLWLRRYSFGLHATKTLNCTLISLMMFVLAPFVFQNIPSNNWIVLGTFGFILLNMFLFAPADTESLPLIGEEHRKTLKRKAMIGTLILTGIALLIPFAEMKTLIMVGSLFQVISINPLTYKLLKRRYRNYEKYE.

4 helical membrane passes run 52 to 74 (YGIA…YLWL), 87 to 107 (LNCT…FQNI), 111 to 131 (NWIV…FAPA), and 156 to 176 (LILT…LIMV).

The protein belongs to the AgrB family.

It localises to the cell membrane. Functionally, may be involved in the proteolytic processing of a quorum sensing system signal molecule precursor. The protein is Putative AgrB-like protein of Listeria monocytogenes serotype 4b (strain CLIP80459).